The following is a 498-amino-acid chain: ATP synthase subunit beta, chloroplastic (498 aa).

172 to 179 (GGAGVGKT) provides a ligand contact to ATP.

Belongs to the ATPase alpha/beta chains family. As to quaternary structure, F-type ATPases have 2 components, CF(1) - the catalytic core - and CF(0) - the membrane proton channel. CF(1) has five subunits: alpha(3), beta(3), gamma(1), delta(1), epsilon(1). CF(0) has four main subunits: a(1), b(1), b'(1) and c(9-12).

Its subcellular location is the plastid. The protein localises to the chloroplast thylakoid membrane. The enzyme catalyses ATP + H2O + 4 H(+)(in) = ADP + phosphate + 5 H(+)(out). Its function is as follows. Produces ATP from ADP in the presence of a proton gradient across the membrane. The catalytic sites are hosted primarily by the beta subunits. The polypeptide is ATP synthase subunit beta, chloroplastic (Phalaenopsis aphrodite subsp. formosana (Moth orchid)).